Reading from the N-terminus, the 284-residue chain is MTTSLQPVHALVPGANLEAYVHSVNSIPLLSPEQERELAERLFYQQDLEAARQMVLAHLRFVVHIAKSYSGYGLAQADLIQEGNVGLMKAVKRFNPEMGVRLVSFAVHWIKAEIHEFILRNWRIVKVATTKAQRKLFFNLRSQKKRLAWLNNEEVHRVAESLGVEPREVREMESRLTGQDMAFDPAADADDESAYQSPAHYLEDHRYDPARQLEDADWSDSSSANLHEALEGLDERSRDILQQRWLSEEKATLHDLAEKYNVSAERIRQLEKNAMSKLKGRILA.

The tract at residues 54 to 123 (MVLAHLRFVV…IHEFILRNWR (70 aa)) is sigma-70 factor domain-2. The Interaction with polymerase core subunit RpoC signature appears at 78-81 (DLIQ). A sigma-70 factor domain-4 region spans residues 229 to 280 (ALEGLDERSRDILQQRWLSEEKATLHDLAEKYNVSAERIRQLEKNAMSKLKG). The H-T-H motif DNA-binding region spans 253–272 (LHDLAEKYNVSAERIRQLEK).

This sequence belongs to the sigma-70 factor family. RpoH subfamily. In terms of assembly, interacts with the RNA polymerase core enzyme.

The protein localises to the cytoplasm. In terms of biological role, sigma factors are initiation factors that promote the attachment of RNA polymerase to specific initiation sites and are then released. This sigma factor is involved in regulation of expression of heat shock genes. This is RNA polymerase sigma factor RpoH from Pseudomonas aeruginosa (strain ATCC 15692 / DSM 22644 / CIP 104116 / JCM 14847 / LMG 12228 / 1C / PRS 101 / PAO1).